Consider the following 185-residue polypeptide: Large ribosomal subunit protein uL18 (185 aa).

Belongs to the universal ribosomal protein uL18 family. Part of the 50S ribosomal subunit. Contacts the 5S and 23S rRNAs.

Functionally, this is one of the proteins that bind and probably mediate the attachment of the 5S RNA into the large ribosomal subunit, where it forms part of the central protuberance. This is Large ribosomal subunit protein uL18 from Halorubrum lacusprofundi (strain ATCC 49239 / DSM 5036 / JCM 8891 / ACAM 34).